The primary structure comprises 126 residues: uncharacterized protein (126 aa).

The signal sequence occupies residues 1 to 27 (MKNLFIFLSLMMMFVLTACGGSKYDDA). The segment at 93–126 (MTDMPGNGENDRLGLSKKTPDYEEVKGEETELEE) is disordered. Residues 101–126 (ENDRLGLSKKTPDYEEVKGEETELEE) are compositionally biased toward basic and acidic residues.

This is an uncharacterized protein from Bacillus subtilis (strain 168).